Here is a 179-residue protein sequence, read N- to C-terminus: Large ribosomal subunit protein bL17 (179 aa).

The tract at residues Thr-127–Arg-179 is disordered. Low complexity predominate over residues Ala-154–Pro-168. Residues Glu-170–Arg-179 show a composition bias toward polar residues.

This sequence belongs to the bacterial ribosomal protein bL17 family. As to quaternary structure, part of the 50S ribosomal subunit. Contacts protein L32.

The protein is Large ribosomal subunit protein bL17 of Tropheryma whipplei (strain TW08/27) (Whipple's bacillus).